A 130-amino-acid polypeptide reads, in one-letter code: Small ribosomal subunit protein uS9 (130 aa).

A disordered region spans residues 107-130 (DARMKERKKPGLKKARKASQFSKR). The span at 111-130 (KERKKPGLKKARKASQFSKR) shows a compositional bias: basic residues.

The protein belongs to the universal ribosomal protein uS9 family.

The chain is Small ribosomal subunit protein uS9 from Ligilactobacillus salivarius (strain UCC118) (Lactobacillus salivarius).